Here is a 154-residue protein sequence, read N- to C-terminus: OCIA domain-containing protein 2 (154 aa).

Positions 1–120 constitute an OCIA domain; the sequence is MASVSTHGNQ…HSFEDQLRGA (120 aa). The residue at position 41 (Lys-41) is an N6-acetyllysine.

Interacts (via OCIA domain) with OCIAD1/ASRIJ and STAT3. In terms of tissue distribution, abundant in kidney, liver and brain.

It is found in the endosome. The protein resides in the mitochondrion. Its subcellular location is the mitochondrion inner membrane. Its function is as follows. Has an essential role in the assembly of mitochondrial respiratory chain complex III. Is also required for STAT3 activation and plays a role in cell migration. The sequence is that of OCIA domain-containing protein 2 (Ociad2) from Mus musculus (Mouse).